The sequence spans 263 residues: HTH-type transcriptional repressor NanR (263 aa).

The interval Met1–Arg25 is disordered. In terms of domain architecture, HTH gntR-type spans Lys30–Pro98. Positions Glu58–Ala77 form a DNA-binding region, H-T-H motif.

The protein belongs to the NanR family.

Transcriptional repressor that controls expression of the genes required for the catabolism of sialic acids. This is HTH-type transcriptional repressor NanR from Salmonella schwarzengrund (strain CVM19633).